The chain runs to 347 residues: UDP-N-acetylenolpyruvoylglucosamine reductase (347 aa).

The FAD-binding PCMH-type domain maps to 23–197 (LPARAARLLR…LRVRFRLPQA (175 aa)). Residue Arg174 is part of the active site. The active-site Proton donor is the Ser247. Residue Glu343 is part of the active site.

The protein belongs to the MurB family. FAD serves as cofactor.

It localises to the cytoplasm. The enzyme catalyses UDP-N-acetyl-alpha-D-muramate + NADP(+) = UDP-N-acetyl-3-O-(1-carboxyvinyl)-alpha-D-glucosamine + NADPH + H(+). The protein operates within cell wall biogenesis; peptidoglycan biosynthesis. Cell wall formation. The chain is UDP-N-acetylenolpyruvoylglucosamine reductase from Azoarcus sp. (strain BH72).